We begin with the raw amino-acid sequence, 266 residues long: 4-hydroxy-tetrahydrodipicolinate reductase (266 aa).

Residues 8-13 (GAAGRM) and glutamate 33 contribute to the NAD(+) site. Arginine 34 is an NADP(+) binding site. NAD(+) contacts are provided by residues 97 to 99 (GST) and 121 to 124 (APNM). Histidine 154 functions as the Proton donor/acceptor in the catalytic mechanism. (S)-2,3,4,5-tetrahydrodipicolinate is bound at residue histidine 155. Catalysis depends on lysine 158, which acts as the Proton donor. Residue 164–165 (GT) coordinates (S)-2,3,4,5-tetrahydrodipicolinate.

The protein belongs to the DapB family.

Its subcellular location is the cytoplasm. The catalysed reaction is (S)-2,3,4,5-tetrahydrodipicolinate + NAD(+) + H2O = (2S,4S)-4-hydroxy-2,3,4,5-tetrahydrodipicolinate + NADH + H(+). It carries out the reaction (S)-2,3,4,5-tetrahydrodipicolinate + NADP(+) + H2O = (2S,4S)-4-hydroxy-2,3,4,5-tetrahydrodipicolinate + NADPH + H(+). It participates in amino-acid biosynthesis; L-lysine biosynthesis via DAP pathway; (S)-tetrahydrodipicolinate from L-aspartate: step 4/4. In terms of biological role, catalyzes the conversion of 4-hydroxy-tetrahydrodipicolinate (HTPA) to tetrahydrodipicolinate. This Trichlorobacter lovleyi (strain ATCC BAA-1151 / DSM 17278 / SZ) (Geobacter lovleyi) protein is 4-hydroxy-tetrahydrodipicolinate reductase.